Reading from the N-terminus, the 77-residue chain is Conotoxin VnMEKL-023 (77 aa).

Positions M1–A19 are cleaved as a signal peptide. A propeptide spanning residues L20–S37 is cleaved from the precursor. Disulfide bonds link C51–C65, C58–C69, and C64–C74.

It belongs to the conotoxin O2 superfamily. As to expression, expressed by the venom duct.

The protein localises to the secreted. The protein is Conotoxin VnMEKL-023 of Conus ventricosus (Mediterranean cone).